The primary structure comprises 391 residues: Elongation factor Tu (391 aa).

A tr-type G domain is found at Lys-10 to Ala-201. The interval Gly-19–Thr-26 is G1. Position 19–26 (Gly-19–Thr-26) interacts with GTP. Residue Thr-26 participates in Mg(2+) binding. Residues Gly-55–Ser-59 are G2. Residues Asp-76–Gly-79 form a G3 region. GTP is bound by residues Asp-76–His-80 and Asn-131–Asp-134. The tract at residues Asn-131–Asp-134 is G4. Residues Ser-169–Leu-171 form a G5 region.

Belongs to the TRAFAC class translation factor GTPase superfamily. Classic translation factor GTPase family. EF-Tu/EF-1A subfamily. Monomer.

Its subcellular location is the cytoplasm. The catalysed reaction is GTP + H2O = GDP + phosphate + H(+). Functionally, GTP hydrolase that promotes the GTP-dependent binding of aminoacyl-tRNA to the A-site of ribosomes during protein biosynthesis. The protein is Elongation factor Tu of Ruegeria pomeroyi (strain ATCC 700808 / DSM 15171 / DSS-3) (Silicibacter pomeroyi).